Consider the following 1528-residue polypeptide: Mitogen-activated protein kinase kinae kinase MCK1 (1528 aa).

The span at 1-11 shows a compositional bias: low complexity; the sequence is MYPGSSQSRPY. Disordered stretches follow at residues 1–84, 109–208, 303–418, 449–481, 607–652, 695–731, 746–786, 811–929, 943–1012, and 1086–1191; these read MYPG…PAPR, ATAP…VPGI, VHAR…NNVR, INGR…KLPF, VKPP…EARL, GKPV…APSA, VQGS…SQPM, SANN…SDDG, KKAK…EDGK, and ATPL…ALLR. Over residues 12–21 the composition is skewed to pro residues; the sequence is QVPPPPPMSP. A compositionally biased stretch (low complexity) spans 22 to 31; it reads PLSQMHQQMS. Residues 53–64 show a composition bias toward pro residues; sequence APPPPPPGPPPA. A compositionally biased stretch (low complexity) spans 157–173; it reads SSQTWQTTSSSSTNTAS. Polar residues-rich tracts occupy residues 174-183, 191-205, and 318-327; these read VNDNVQSNAP, NNSA…SSNV, and HGRQGSINSR. Over residues 328-337 the composition is skewed to basic and acidic residues; that stretch reads GNDKGTHDGS. The span at 338–363 shows a compositional bias: polar residues; sequence DSPNTPSSQSRSTTIPTFPDGSSFSN. The segment covering 396 to 408 has biased composition (low complexity); that stretch reads SSTPKSSTLSVSP. Residues 409 to 418 show a composition bias toward polar residues; that stretch reads HSSRFGNNVR. Composition is skewed to polar residues over residues 613 to 622 and 630 to 641; these read SQQSTWSAGD and GTSSSMSRQQNT. Composition is skewed to basic and acidic residues over residues 642 to 652 and 698 to 714; these read LKDDQSEEARL and VDFD…KNTD. The span at 846 to 860 shows a compositional bias: polar residues; that stretch reads RSQTAGDLSPISQMP. The span at 917–928 shows a compositional bias: acidic residues; that stretch reads QSDDDSGDDSDD. Residues 977–986 show a composition bias toward polar residues; the sequence is VSFNSPQSAR. Over residues 1001-1012 the composition is skewed to basic and acidic residues; that stretch reads PKSDMWDSEDGK. Over residues 1086-1111 the composition is skewed to polar residues; the sequence is ATPLNSLPPSRVQSMYNESDTLGSDE. Positions 1142–1152 are enriched in basic and acidic residues; it reads SIREKARGAHE. Polar residues predominate over residues 1158-1188; it reads TQTSMAAPQGLSRSGGTPATETQPTQNNSSA. The Protein kinase domain maps to 1238–1507; that stretch reads WFKGQLIGKG…NKLLSQHPFC (270 aa). ATP-binding positions include 1244–1252 and lysine 1267; that span reads IGKGTYGRV.

Belongs to the protein kinase superfamily. STE Ser/Thr protein kinase family. MAP kinase kinase kinase subfamily. Interacts with the adapter protein MST50 and MIP11.

The enzyme catalyses L-seryl-[protein] + ATP = O-phospho-L-seryl-[protein] + ADP + H(+). It carries out the reaction L-threonyl-[protein] + ATP = O-phospho-L-threonyl-[protein] + ADP + H(+). Its function is as follows. Mitogen-activated protein kinase kinase kinase; part of the MCK1-MKK2-MPS1 MAP kinase (MAPK) signal transduction cascade that is essential for appressorium formation, penetration and invasive growth. Beside its role in pathogenesis, the MPS1 cascade is active in conidiation and cellular stress responses. Targets downstream of the the MPS1-MAPK pathway include transcription factors MIG1 and SWI6, as well as GSK1 and MPG1. This Pyricularia oryzae (strain 70-15 / ATCC MYA-4617 / FGSC 8958) (Rice blast fungus) protein is Mitogen-activated protein kinase kinae kinase MCK1.